Here is a 211-residue protein sequence, read N- to C-terminus: Protein-L-isoaspartate O-methyltransferase (211 aa).

The active site involves Ser62.

It belongs to the methyltransferase superfamily. L-isoaspartyl/D-aspartyl protein methyltransferase family.

Its subcellular location is the cytoplasm. The enzyme catalyses [protein]-L-isoaspartate + S-adenosyl-L-methionine = [protein]-L-isoaspartate alpha-methyl ester + S-adenosyl-L-homocysteine. Functionally, catalyzes the methyl esterification of L-isoaspartyl residues in peptides and proteins that result from spontaneous decomposition of normal L-aspartyl and L-asparaginyl residues. It plays a role in the repair and/or degradation of damaged proteins. This is Protein-L-isoaspartate O-methyltransferase from Shewanella loihica (strain ATCC BAA-1088 / PV-4).